The sequence spans 116 residues: Large ribosomal subunit protein bL17 (116 aa).

The protein belongs to the bacterial ribosomal protein bL17 family. Part of the 50S ribosomal subunit. Contacts protein L32.

The protein is Large ribosomal subunit protein bL17 of Nostoc punctiforme (strain ATCC 29133 / PCC 73102).